The primary structure comprises 442 residues: Protein UNUSUAL FLORAL ORGANS (442 aa).

Residues 1–85 (MDSTVFINNP…RFYSLLFSNT (85 aa)) form an interaction with SKP1A region. Residues 44 to 90 (GRIWSKLPPPLLDRVIAFLPPPAFFRTRCVCKRFYSLLFSNTFLETY) enclose the F-box domain.

As to quaternary structure, part of a putative SCF (ASK/Cullin/F-box) ubiquitin ligase complex. Interacts with SKP1A/ASK1, SKP1B/ASK2 and ASK11.

It is found in the nucleus. The protein operates within protein modification; protein ubiquitination. In terms of biological role, component of SCF(ASK-cullin-F-box) E3 ubiquitin ligase complexes, which may mediate the ubiquitination and subsequent proteasomal degradation of target proteins. Considered as a meristem identity factor required for normal growth of the young floral meristem. Acts together with LEAFY to positively regulate the B class floral homeotic genes APETALA3 and PISTILLATA. In this way, operates as a region-specific regulator for petal and stamen development. Alternatively, may play a role as a negative regulator of the C class floral homeotic genes. Interacts together with the SKP1-like protein ASK1 to form a ubiquitin E3 ligase complex and could indirectly promote the ubiquitination and degradation of specific proteins controlling the floral primordia development like repressors of B class floral homeotic genes. This is Protein UNUSUAL FLORAL ORGANS (UFO) from Arabidopsis thaliana (Mouse-ear cress).